The following is a 51-amino-acid chain: Basic phospholipase A2 homolog BmatTX-I (51 aa).

Cysteine 28 and cysteine 44 are oxidised to a cystine.

As to quaternary structure, monomer. Expressed by the venom gland.

It localises to the secreted. In terms of biological role, snake venom phospholipase A2 homolog that lacks enzymatic activity. Shows high myotoxic activity, neutrophile activation (demonstrated by activation induction of IL-1beta production), slight cytotoxicity against Jurkat (leukemia T) and SK-BR-3 (breast adenocarcinoma) tumor cell lines, and slight antiparasitic activity against promastigote forms of Leishmania amazonensis. A model of myotoxic mechanism has been proposed: an apo Lys49-PLA2 is activated by the entrance of a hydrophobic molecule (e.g. fatty acid) at the hydrophobic channel of the protein leading to a reorientation of a monomer. This reorientation causes a transition between 'inactive' to 'active' states, causing alignment of C-terminal and membrane-docking sites (MDoS) side-by-side and putting the membrane-disruption sites (MDiS) in the same plane, exposed to solvent and in a symmetric position for both monomers. The MDoS region stabilizes the toxin on membrane by the interaction of charged residues with phospholipid head groups. Subsequently, the MDiS region destabilizes the membrane with penetration of hydrophobic residues. This insertion causes a disorganization of the membrane, allowing an uncontrolled influx of ions (i.e. calcium and sodium), and eventually triggering irreversible intracellular alterations and cell death. The polypeptide is Basic phospholipase A2 homolog BmatTX-I (Bothrops mattogrossensis (Pitviper)).